Consider the following 250-residue polypeptide: 3-deoxy-manno-octulosonate cytidylyltransferase (250 aa).

The protein belongs to the KdsB family.

It localises to the cytoplasm. It catalyses the reaction 3-deoxy-alpha-D-manno-oct-2-ulosonate + CTP = CMP-3-deoxy-beta-D-manno-octulosonate + diphosphate. It participates in nucleotide-sugar biosynthesis; CMP-3-deoxy-D-manno-octulosonate biosynthesis; CMP-3-deoxy-D-manno-octulosonate from 3-deoxy-D-manno-octulosonate and CTP: step 1/1. It functions in the pathway bacterial outer membrane biogenesis; lipopolysaccharide biosynthesis. Functionally, activates KDO (a required 8-carbon sugar) for incorporation into bacterial lipopolysaccharide in Gram-negative bacteria. The protein is 3-deoxy-manno-octulosonate cytidylyltransferase of Cytophaga hutchinsonii (strain ATCC 33406 / DSM 1761 / CIP 103989 / NBRC 15051 / NCIMB 9469 / D465).